Consider the following 428-residue polypeptide: GTPase Obg (428 aa).

The 158-residue stretch at 1–158 folds into the Obg domain; the sequence is MFVDQVKIYV…RDVILELKVL (158 aa). In terms of domain architecture, OBG-type G spans 159–329; it reads ADVGLVGFPS…LLFEVANLIE (171 aa). Residues 165 to 172, 190 to 194, 212 to 215, 282 to 285, and 310 to 312 contribute to the GTP site; these read GFPSVGKS, FTTIV, DLPG, NKMD, and SAV. Ser172 and Thr192 together coordinate Mg(2+). One can recognise an OCT domain in the interval 350–428; that stretch reads KFETEGVKFD…ILEYEFEFID (79 aa).

This sequence belongs to the TRAFAC class OBG-HflX-like GTPase superfamily. OBG GTPase family. Monomer. It depends on Mg(2+) as a cofactor.

The protein localises to the cytoplasm. Functionally, an essential GTPase which binds GTP, GDP and possibly (p)ppGpp with moderate affinity, with high nucleotide exchange rates and a fairly low GTP hydrolysis rate. Plays a role in control of the cell cycle, stress response, ribosome biogenesis and in those bacteria that undergo differentiation, in morphogenesis control. In Bacillus thuringiensis (strain Al Hakam), this protein is GTPase Obg.